Consider the following 256-residue polypeptide: Imidazole glycerol phosphate synthase subunit HisF (256 aa).

Active-site residues include Asp-11 and Asp-130.

This sequence belongs to the HisA/HisF family. In terms of assembly, heterodimer of HisH and HisF.

The protein localises to the cytoplasm. It carries out the reaction 5-[(5-phospho-1-deoxy-D-ribulos-1-ylimino)methylamino]-1-(5-phospho-beta-D-ribosyl)imidazole-4-carboxamide + L-glutamine = D-erythro-1-(imidazol-4-yl)glycerol 3-phosphate + 5-amino-1-(5-phospho-beta-D-ribosyl)imidazole-4-carboxamide + L-glutamate + H(+). It functions in the pathway amino-acid biosynthesis; L-histidine biosynthesis; L-histidine from 5-phospho-alpha-D-ribose 1-diphosphate: step 5/9. Functionally, IGPS catalyzes the conversion of PRFAR and glutamine to IGP, AICAR and glutamate. The HisF subunit catalyzes the cyclization activity that produces IGP and AICAR from PRFAR using the ammonia provided by the HisH subunit. The polypeptide is Imidazole glycerol phosphate synthase subunit HisF (Prochlorococcus marinus (strain MIT 9312)).